Here is a 395-residue protein sequence, read N- to C-terminus: Putative nickel insertion protein (395 aa).

The protein belongs to the LarC family.

The polypeptide is Putative nickel insertion protein (Roseiflexus castenholzii (strain DSM 13941 / HLO8)).